The primary structure comprises 917 residues: Protein FAN (917 aa).

Positions 176–247 (RLARTSFDKN…QDVRRIYKRR (72 aa)) constitute a GRAM domain. Residues 189 to 286 (NISEKLHMEC…DRDDLYFYIA (98 aa)) form the BEACH-type PH domain. Residues 290–575 (EHHVAEHTAE…QLFVTPHPRR (286 aa)) enclose the BEACH domain. WD repeat units lie at residues 628–658 (IHKE…KMFS), 670–700 (FSNM…YFYS), 712–740 (GHDD…KVWS), 761–791 (EHDV…NIWD), 803–833 (CHSG…NVID), and 884–914 (GHTG…IFWK).

Ubiquitous.

In terms of biological role, couples the p55 TNF-receptor (TNF-R55 / TNFR1) to neutral sphingomyelinase (N-SMASE). Specifically binds to the N-smase activation domain of TNF-R55. May regulate ceramide production by N-SMASE. This is Protein FAN (NSMAF) from Homo sapiens (Human).